The primary structure comprises 301 residues: Putative F-box/LRR-repeat protein 19 (301 aa).

Positions proline 18–leucine 66 constitute an F-box domain. 5 LRR repeats span residues isoleucine 108–asparagine 133, cysteine 134–tyrosine 159, serine 160–leucine 185, tyrosine 231–glycine 256, and cysteine 257–aspartate 282.

This Arabidopsis thaliana (Mouse-ear cress) protein is Putative F-box/LRR-repeat protein 19 (FBL19).